Consider the following 229-residue polypeptide: MGQKVHPNGIRLGIVKPWNTTWFANSQEFADNLDGDFKVRQFLIKELKKASLSRVVIERPAKSIRVTIHTARPGIVIGKKGEDVEKLRAHISKIAGVPAQINISEVRKPELDAQLVGDSIASQLERRVMFRRAMKRAVQNAMRLGAKGIKVQVGGRLGGAEIARSEWYREGRVPLHTLRADIDYATSSAHTQYGVIGVKVWIFKGEVLGGMPIEEPKADKPKKQRKSRK.

The region spanning 39–107 (VRQFLIKELK…PAQINISEVR (69 aa)) is the KH type-2 domain.

It belongs to the universal ribosomal protein uS3 family. In terms of assembly, part of the 30S ribosomal subunit. Forms a tight complex with proteins S10 and S14.

Its function is as follows. Binds the lower part of the 30S subunit head. Binds mRNA in the 70S ribosome, positioning it for translation. This is Small ribosomal subunit protein uS3 from Photobacterium profundum (strain SS9).